Consider the following 103-residue polypeptide: MGNIFSPTHLIIILLLILLLFGRGRVAELMGDVAKGIKAFKKNMKEEEESIEDKVEMADTSQVINEESQQSQPLSVKRAAIRRKASSDSKGGKASIAKKQRVK.

A helical membrane pass occupies residues 1–21 (MGNIFSPTHLIIILLLILLLF). Residues 48-103 (EESIEDKVEMADTSQVINEESQQSQPLSVKRAAIRRKASSDSKGGKASIAKKQRVK) are disordered. Polar residues predominate over residues 59-74 (DTSQVINEESQQSQPL).

This sequence belongs to the TatA/E family. As to quaternary structure, the Tat system comprises two distinct complexes: a TatABC complex, containing multiple copies of TatA, TatB and TatC subunits, and a separate TatA complex, containing only TatA subunits. Substrates initially bind to the TatABC complex, which probably triggers association of the separate TatA complex to form the active translocon.

The protein localises to the cell inner membrane. Functionally, part of the twin-arginine translocation (Tat) system that transports large folded proteins containing a characteristic twin-arginine motif in their signal peptide across membranes. TatA could form the protein-conducting channel of the Tat system. The chain is Sec-independent protein translocase protein TatA from Bartonella tribocorum (strain CIP 105476 / IBS 506).